The primary structure comprises 275 residues: Large ribosomal subunit protein uL2c (275 aa).

The interval 224 to 275 is disordered; that stretch reads AMNPVDHPHGGGEGRTPIGRKKPVTPWGYSALGKKSRKRNRYSDASILRRRE.

This sequence belongs to the universal ribosomal protein uL2 family. Part of the 50S ribosomal subunit.

The protein localises to the plastid. The protein resides in the chloroplast. In Picea abies (Norway spruce), this protein is Large ribosomal subunit protein uL2c (rpl2).